The chain runs to 612 residues: 1,8-cineole synthase, chloroplastic (612 aa).

The transit peptide at 1–52 (MALVCGAPLASRSCLNKSLISSTHELKPLRRTILPTLRWKSATPSINMCLTT) directs the protein to the chloroplast. 3 residues coordinate Mg(2+): Asp363, Asp367, and Asp515. Residues 363–367 (DDIYD) carry the DDXXD motif motif.

It belongs to the terpene synthase family. Tpsd subfamily. Requires Mg(2+) as cofactor. Mn(2+) serves as cofactor.

The protein resides in the plastid. It is found in the chloroplast. The catalysed reaction is (2E)-geranyl diphosphate + H2O = 1,8-cineole + diphosphate. The protein operates within terpene metabolism; oleoresin biosynthesis. Its function is as follows. Terpene synthase (TPS) involved in the biosynthesis of monoterpene natural products included in conifer oleoresin secretions and volatile emissions; these compounds contribute to biotic and abiotic stress defense against herbivores and pathogens. Catalyzes the conversion of (2E)-geranyl diphosphate (GPP) to 1,8-cineole. In Picea glauca (White spruce), this protein is 1,8-cineole synthase, chloroplastic.